The chain runs to 98 residues: C-X-C motif chemokine 10 (98 aa).

A signal peptide spans 1 to 21 (MNPSAAVIFCLILLGLSGTQG). R26 is modified (citrulline). Cystine bridges form between C30-C57 and C32-C74.

This sequence belongs to the intercrine alpha (chemokine CxC) family. In terms of assembly, monomer, dimer, and tetramer. Interacts with CXCR3 (via N-terminus). Expressed in the spleen, thymus, lymph nodes and liver. Expressed in astrocytes, microglia, and neurons.

The protein resides in the secreted. Functionally, pro-inflammatory cytokine that is involved in a wide variety of processes such as chemotaxis, differentiation, and activation of peripheral immune cells, regulation of cell growth, apoptosis and modulation of angiostatic effects. Plays thereby an important role during viral infections by stimulating the activation and migration of immune cells to the infected sites. Mechanistically, binding of CXCL10 to the CXCR3 receptor activates G protein-mediated signaling and results in downstream activation of phospholipase C-dependent pathway, an increase in intracellular calcium production and actin reorganization. In turn, recruitment of activated Th1 lymphocytes occurs at sites of inflammation. Activation of the CXCL10/CXCR3 axis also plays an important role in neurons in response to brain injury for activating microglia, the resident macrophage population of the central nervous system, and directing them to the lesion site. This recruitment is an essential element for neuronal reorganization. This Mus musculus (Mouse) protein is C-X-C motif chemokine 10 (Cxcl10).